The chain runs to 1411 residues: DNA-directed RNA polymerase subunit beta' (1411 aa).

Zn(2+) contacts are provided by Cys-69, Cys-71, Cys-84, and Cys-87. 3 residues coordinate Mg(2+): Asp-461, Asp-463, and Asp-465. 4 residues coordinate Zn(2+): Cys-809, Cys-883, Cys-890, and Cys-893.

Belongs to the RNA polymerase beta' chain family. In terms of assembly, the RNAP catalytic core consists of 2 alpha, 1 beta, 1 beta' and 1 omega subunit. When a sigma factor is associated with the core the holoenzyme is formed, which can initiate transcription. Requires Mg(2+) as cofactor. It depends on Zn(2+) as a cofactor.

It carries out the reaction RNA(n) + a ribonucleoside 5'-triphosphate = RNA(n+1) + diphosphate. Its function is as follows. DNA-dependent RNA polymerase catalyzes the transcription of DNA into RNA using the four ribonucleoside triphosphates as substrates. This chain is DNA-directed RNA polymerase subunit beta', found in Ehrlichia ruminantium (strain Welgevonden).